A 462-amino-acid chain; its full sequence is Cysteine--tRNA ligase (462 aa).

Zn(2+) is bound at residue C24. Positions 26–36 (PTVYDDAHLGH) match the 'HIGH' region motif. The Zn(2+) site is built by C199, H224, and E228. Residues 256 to 260 (KMSKS) carry the 'KMSKS' region motif. K259 is an ATP binding site.

It belongs to the class-I aminoacyl-tRNA synthetase family. As to quaternary structure, monomer. The cofactor is Zn(2+).

Its subcellular location is the cytoplasm. It catalyses the reaction tRNA(Cys) + L-cysteine + ATP = L-cysteinyl-tRNA(Cys) + AMP + diphosphate. The sequence is that of Cysteine--tRNA ligase from Campylobacter jejuni subsp. doylei (strain ATCC BAA-1458 / RM4099 / 269.97).